We begin with the raw amino-acid sequence, 685 residues long: DNA ligase (685 aa).

NAD(+) is bound by residues 47 to 51, 96 to 97, and E125; these read DSEYD and SL. K127 acts as the N6-AMP-lysine intermediate in catalysis. NAD(+)-binding residues include R148, E185, K304, and K328. The Zn(2+) site is built by C422, C425, C440, and C446. The 81-residue stretch at 605–685 folds into the BRCT domain; that stretch reads ADAQPLKGQT…ELLALLAANA (81 aa).

Belongs to the NAD-dependent DNA ligase family. LigA subfamily. Mg(2+) serves as cofactor. The cofactor is Mn(2+).

The catalysed reaction is NAD(+) + (deoxyribonucleotide)n-3'-hydroxyl + 5'-phospho-(deoxyribonucleotide)m = (deoxyribonucleotide)n+m + AMP + beta-nicotinamide D-nucleotide.. In terms of biological role, DNA ligase that catalyzes the formation of phosphodiester linkages between 5'-phosphoryl and 3'-hydroxyl groups in double-stranded DNA using NAD as a coenzyme and as the energy source for the reaction. It is essential for DNA replication and repair of damaged DNA. The chain is DNA ligase from Shewanella baltica (strain OS195).